The sequence spans 400 residues: Phosphoglycerate kinase (400 aa).

Residues 21 to 23 (DFN), Arg-36, 59 to 62 (HCSR), Arg-118, and Arg-151 contribute to the substrate site. Residues Lys-201, Glu-323, and 353 to 356 (GGDT) each bind ATP.

Belongs to the phosphoglycerate kinase family. Monomer.

It is found in the cytoplasm. The catalysed reaction is (2R)-3-phosphoglycerate + ATP = (2R)-3-phospho-glyceroyl phosphate + ADP. Its pathway is carbohydrate degradation; glycolysis; pyruvate from D-glyceraldehyde 3-phosphate: step 2/5. In Bartonella bacilliformis (strain ATCC 35685 / KC583 / Herrer 020/F12,63), this protein is Phosphoglycerate kinase.